The following is a 174-amino-acid chain: UPF0316 protein LMOf2365_1801 (174 aa).

3 helical membrane-spanning segments follow: residues 4–24, 36–56, and 62–82; these read GIFIVATIFIVNILYVTIYTV, LAALSSVFEMIIYVVALSLVL, and IANVLAYAIGFGVGIIVGMKI.

Belongs to the UPF0316 family.

It is found in the cell membrane. This chain is UPF0316 protein LMOf2365_1801, found in Listeria monocytogenes serotype 4b (strain F2365).